We begin with the raw amino-acid sequence, 57 residues long: DNA-directed RNA polymerase subunit Rpo6 (57 aa).

Belongs to the archaeal Rpo6/eukaryotic RPB6 RNA polymerase subunit family. As to quaternary structure, part of the RNA polymerase complex.

The protein resides in the cytoplasm. The protein localises to the chromosome. The catalysed reaction is RNA(n) + a ribonucleoside 5'-triphosphate = RNA(n+1) + diphosphate. In terms of biological role, DNA-dependent RNA polymerase (RNAP) catalyzes the transcription of DNA into RNA using the four ribonucleoside triphosphates as substrates. The polypeptide is DNA-directed RNA polymerase subunit Rpo6 (Thermococcus kodakarensis (strain ATCC BAA-918 / JCM 12380 / KOD1) (Pyrococcus kodakaraensis (strain KOD1))).